The primary structure comprises 135 residues: Fluoride-specific ion channel FluC (135 aa).

The next 4 helical transmembrane spans lie at 7 to 27, 37 to 57, 70 to 90, and 105 to 125; these read IAAI…LGLA, IGTL…IAYV, FMIT…AELF, and LGLH…TIGL. Na(+) contacts are provided by Gly77 and Ser80.

Belongs to the fluoride channel Fluc/FEX (TC 1.A.43) family.

The protein resides in the cell inner membrane. It carries out the reaction fluoride(in) = fluoride(out). Its activity is regulated as follows. Na(+) is not transported, but it plays an essential structural role and its presence is essential for fluoride channel function. Its function is as follows. Fluoride-specific ion channel. Important for reducing fluoride concentration in the cell, thus reducing its toxicity. The chain is Fluoride-specific ion channel FluC from Xanthomonas oryzae pv. oryzae (strain MAFF 311018).